Here is a 309-residue protein sequence, read N- to C-terminus: Palmitoyltransferase ZDHHC19 (309 aa).

The next 2 helical transmembrane spans lie at 29–49 (LFAA…FAFP) and 59–79 (WAFP…LVSL). Positions 112-162 (QWCPKCCFHRPPRTYHCPWCNICVEDFDHHCKWVNNCIGHRNFRFFMLLVL) constitute a DHHC domain. The active-site S-palmitoyl cysteine intermediate is Cys142. 2 helical membrane-spanning segments follow: residues 160 to 180 (LVLS…IFLV) and 193 to 213 (IAIV…LLLL). Residues 280–294 (LHPPMSPSALNPPAP) are compositionally biased toward pro residues. The interval 280–309 (LHPPMSPSALNPPAPTSGSLQSREGTPGAW) is disordered.

Belongs to the DHHC palmitoyltransferase family.

It localises to the golgi apparatus membrane. It is found in the cytoplasm. Its subcellular location is the perinuclear region. It catalyses the reaction L-cysteinyl-[protein] + hexadecanoyl-CoA = S-hexadecanoyl-L-cysteinyl-[protein] + CoA. Functionally, palmitoyltransferase that mediates palmitoylation oproteins, such as RRAS and SQSTM1. Catalyzes palmitoylation of RRAS, leading to increased cell viability. Acts as a positive regulator of autophagy by mediating palmitoylation of SQSTM1, promoting affinity between SQSTM1 and ATG8 proteins and recruitment of ubiquitinated cargo proteins to autophagosomes. Its function is as follows. (Microbial infection) Promotes Chikungunya virus (CHIKV) replication by mediating viral nsp1 palmitoylation. This is Palmitoyltransferase ZDHHC19 from Homo sapiens (Human).